A 490-amino-acid polypeptide reads, in one-letter code: Aspartyl/glutamyl-tRNA(Asn/Gln) amidotransferase subunit B (490 aa).

The protein belongs to the GatB/GatE family. GatB subfamily. In terms of assembly, heterotrimer of A, B and C subunits.

The catalysed reaction is L-glutamyl-tRNA(Gln) + L-glutamine + ATP + H2O = L-glutaminyl-tRNA(Gln) + L-glutamate + ADP + phosphate + H(+). It carries out the reaction L-aspartyl-tRNA(Asn) + L-glutamine + ATP + H2O = L-asparaginyl-tRNA(Asn) + L-glutamate + ADP + phosphate + 2 H(+). Its function is as follows. Allows the formation of correctly charged Asn-tRNA(Asn) or Gln-tRNA(Gln) through the transamidation of misacylated Asp-tRNA(Asn) or Glu-tRNA(Gln) in organisms which lack either or both of asparaginyl-tRNA or glutaminyl-tRNA synthetases. The reaction takes place in the presence of glutamine and ATP through an activated phospho-Asp-tRNA(Asn) or phospho-Glu-tRNA(Gln). In Prochlorococcus marinus (strain MIT 9515), this protein is Aspartyl/glutamyl-tRNA(Asn/Gln) amidotransferase subunit B.